A 547-amino-acid polypeptide reads, in one-letter code: Chaperonin GroEL 1 (547 aa).

ATP-binding positions include 30–33, lysine 51, 87–91, glycine 415, and aspartate 496; these read TLGP and DGTTT.

This sequence belongs to the chaperonin (HSP60) family. In terms of assembly, forms a cylinder of 14 subunits composed of two heptameric rings stacked back-to-back. Interacts with the co-chaperonin GroES.

Its subcellular location is the cytoplasm. It carries out the reaction ATP + H2O + a folded polypeptide = ADP + phosphate + an unfolded polypeptide.. Functionally, together with its co-chaperonin GroES, plays an essential role in assisting protein folding. The GroEL-GroES system forms a nano-cage that allows encapsulation of the non-native substrate proteins and provides a physical environment optimized to promote and accelerate protein folding. This chain is Chaperonin GroEL 1, found in Rhodopseudomonas palustris (strain BisB5).